A 139-amino-acid chain; its full sequence is Nuclear receptor 2C2-associated protein (139 aa).

Belongs to the NR2C2AP family. As to quaternary structure, interacts with NR2C2/TR4. In terms of tissue distribution, expressed in all tissues examined, with highest expression in heart, skeletal muscle and pancreas.

It is found in the nucleus. Its function is as follows. May act as a repressor of NR2C2-mediated transactivation by suppressing the binding between NR2C2/TR4 and the TR4-response element in target genes. In Homo sapiens (Human), this protein is Nuclear receptor 2C2-associated protein (NR2C2AP).